We begin with the raw amino-acid sequence, 270 residues long: uncharacterized protein (270 aa).

The signal sequence occupies residues 1-23 (MKKLLIILAATLVLVLGSSGNFR).

This is an uncharacterized protein from Archaeoglobus fulgidus (strain ATCC 49558 / DSM 4304 / JCM 9628 / NBRC 100126 / VC-16).